The primary structure comprises 1382 residues: Hepatocyte growth factor receptor (1382 aa).

An N-terminal signal peptide occupies residues 1-24; the sequence is MKASAVLAPGILALLFTLVQGSDG. The Extracellular segment spans residues 25–935; it reads ECHEALAKSE…VQPDQNFTGL (911 aa). One can recognise a Sema domain in the interval 27-516; the sequence is HEALAKSEMN…TGKRITKIPL (490 aa). Residues Asn45, Asn100, and Asn106 are each glycosylated (N-linked (GlcNAc...) asparagine). 4 cysteine pairs are disulfide-bonded: Cys95–Cys101, Cys98–Cys160, Cys133–Cys141, and Cys173–Cys176. N-linked (GlcNAc...) asparagine glycosylation is found at Asn203 and Asn359. 2 disulfide bridges follow: Cys299/Cys364 and Cys386/Cys398. 2 N-linked (GlcNAc...) asparagine glycosylation sites follow: Asn400 and Asn406. Cystine bridges form between Cys521/Cys539, Cys527/Cys562, Cys530/Cys546, and Cys542/Cys552. IPT/TIG domains lie at 564 to 656, 658 to 740, and 743 to 837; these read PAIH…FSYV, PVIT…FSYQ, and PVVY…LIYV. Residue Thr583 is glycosylated (O-linked (Man) threonine). Asn608 and Asn636 each carry an N-linked (GlcNAc...) asparagine glycan. O-linked (Man) threonine glycans are attached at residues Thr677 and Thr762. N-linked (GlcNAc...) asparagine glycosylation is found at Asn786, Asn880, and Asn931. Residues 936–956 traverse the membrane as a helical segment; the sequence is IVGVVSISIILLLLLGLFLWM. Residues 957-1382 are Cytoplasmic-facing; that stretch reads KKRKQIKDLG…QDNINGEVDT (426 aa). At Ser967 the chain carries Phosphoserine. Residue Thr978 is modified to Phosphothreonine. 3 positions are modified to phosphoserine: Ser991, Ser998, and Ser1001. Position 1004 is a phosphotyrosine (Tyr1004). In terms of domain architecture, Protein kinase spans 1079 to 1346; it reads VHFNEVIGRG…RISAIFSTFI (268 aa). ATP is bound by residues 1085–1093 and Lys1111; that span reads IGRGHFGCV. The active-site Proton acceptor is the Asp1205. The tract at residues 1213-1382 is interaction with RANBP9; it reads LDEKFTVKVA…QDNINGEVDT (170 aa). Tyr1231 carries the phosphotyrosine modification. 2 positions are modified to phosphotyrosine; by autocatalysis: Tyr1235 and Tyr1236. At Thr1290 the chain carries Phosphothreonine. The interval 1321-1360 is interaction with MUC20; that stretch reads WHPKAEMRPSFSELVSRISAIFSTFIGEHYVHVNATYVNV. A phosphotyrosine; by autocatalysis mark is found at Tyr1350 and Tyr1357. Tyr1366 carries the post-translational modification Phosphotyrosine.

This sequence belongs to the protein kinase superfamily. Tyr protein kinase family. Heterodimer made of an alpha chain (50 kDa) and a beta chain (145 kDa) which are disulfide linked. Binds PLXNB1. Interacts when phosphorylated with downstream effectors including STAT3, PIK3R1, SRC, PCLG1, GRB2 and GAB1. Interacts with SPSB1, SPSB2 and SPSB4. Interacts with INPP5D/SHIP1. When phosphorylated at Tyr-1357, interacts with INPPL1/SHIP2. Interacts with RANBP9 and RANBP10, as well as SPSB1, SPSB2, SPSB3 and SPSB4. SPSB1 binding occurs in the presence and in the absence of HGF, however HGF treatment has a positive effect on this interaction. Interacts with MUC20; prevents interaction with GRB2 and suppresses hepatocyte growth factor-induced cell proliferation. Interacts with GRB10. Interacts with PTPN1 and PTPN2. Interacts with HSP90AA1 and HSP90AB1; the interaction suppresses MET kinase activity. Interacts with tensin TNS3. Interacts (when phosphorylated) with tensin TNS4 (via SH2 domain); the interaction increases MET protein stability by inhibiting MET endocytosis and subsequent lysosomal degradation. Autophosphorylated in response to ligand binding on Tyr-1235 and Tyr-1236 in the kinase domain leading to further phosphorylation of Tyr-1350 and Tyr-1357 in the C-terminal multifunctional docking site. Dephosphorylated by PTPRJ at Tyr-1350 and Tyr-1366. Dephosphorylated by PTPN1 and PTPN2. In terms of processing, ubiquitinated. Ubiquitination by CBL regulates the receptor stability and activity through proteasomal degradation. Post-translationally, O-mannosylation of IPT/TIG domains by TMEM260 is required for protein maturation. O-mannosylated residues are composed of single mannose glycans that are not elongated or modified.

Its subcellular location is the membrane. It catalyses the reaction L-tyrosyl-[protein] + ATP = O-phospho-L-tyrosyl-[protein] + ADP + H(+). Its activity is regulated as follows. In its inactive state, the C-terminal tail interacts with the catalytic domain and inhibits the kinase activity. Upon ligand binding, the C-terminal tail is displaced and becomes phosphorylated, thus increasing the kinase activity. Receptor tyrosine kinase that transduces signals from the extracellular matrix into the cytoplasm by binding to hepatocyte growth factor/HGF ligand. Regulates many physiological processes including proliferation, scattering, morphogenesis and survival. Ligand binding at the cell surface induces autophosphorylation of MET on its intracellular domain that provides docking sites for downstream signaling molecules. Following activation by ligand, interacts with the PI3-kinase subunit PIK3R1, PLCG1, SRC, GRB2, STAT3 or the adapter GAB1. Recruitment of these downstream effectors by MET leads to the activation of several signaling cascades including the RAS-ERK, PI3 kinase-AKT, or PLCgamma-PKC. The RAS-ERK activation is associated with the morphogenetic effects while PI3K/AKT coordinates prosurvival effects. During embryonic development, MET signaling plays a role in gastrulation, development and migration of muscles and neuronal precursors, angiogenesis and kidney formation. In adults, participates in wound healing as well as organ regeneration and tissue remodeling. Also promotes differentiation and proliferation of hematopoietic cells. The polypeptide is Hepatocyte growth factor receptor (MET) (Microcebus murinus (Gray mouse lemur)).